The primary structure comprises 338 residues: Heat-inducible transcription repressor HrcA (338 aa).

It belongs to the HrcA family.

Functionally, negative regulator of class I heat shock genes (grpE-dnaK-dnaJ and groELS operons). Prevents heat-shock induction of these operons. The protein is Heat-inducible transcription repressor HrcA of Bacillus cereus (strain ATCC 10987 / NRS 248).